The following is an 82-amino-acid chain: Large ribosomal subunit protein bL31B (82 aa).

The protein belongs to the bacterial ribosomal protein bL31 family. Type B subfamily. In terms of assembly, part of the 50S ribosomal subunit.

This chain is Large ribosomal subunit protein bL31B, found in Pectobacterium carotovorum subsp. carotovorum (strain PC1).